The following is a 438-amino-acid chain: 3-phosphoshikimate 1-carboxyvinyltransferase (438 aa).

Positions 26, 27, and 31 each coordinate 3-phosphoshikimate. A phosphoenolpyruvate-binding site is contributed by Lys-26. Residues Gly-99 and Arg-127 each contribute to the phosphoenolpyruvate site. Residues Ser-170, Ser-171, Gln-172, Ser-199, Glu-314, and His-343 each coordinate 3-phosphoshikimate. Gln-172 is a phosphoenolpyruvate binding site. Catalysis depends on Glu-314, which acts as the Proton acceptor. Residues Arg-347, Arg-388, and Lys-413 each coordinate phosphoenolpyruvate.

This sequence belongs to the EPSP synthase family. Monomer.

Its subcellular location is the cytoplasm. The enzyme catalyses 3-phosphoshikimate + phosphoenolpyruvate = 5-O-(1-carboxyvinyl)-3-phosphoshikimate + phosphate. It participates in metabolic intermediate biosynthesis; chorismate biosynthesis; chorismate from D-erythrose 4-phosphate and phosphoenolpyruvate: step 6/7. Its function is as follows. Catalyzes the transfer of the enolpyruvyl moiety of phosphoenolpyruvate (PEP) to the 5-hydroxyl of shikimate-3-phosphate (S3P) to produce enolpyruvyl shikimate-3-phosphate and inorganic phosphate. In Mycobacterium sp. (strain MCS), this protein is 3-phosphoshikimate 1-carboxyvinyltransferase.